A 195-amino-acid chain; its full sequence is 4'-phosphopantetheinyl transferase AcpT (195 aa).

Belongs to the P-Pant transferase superfamily. Gsp/Sfp/HetI/AcpT family.

It catalyses the reaction apo-[ACP] + CoA = holo-[ACP] + adenosine 3',5'-bisphosphate + H(+). Functionally, may be involved in an alternative pathway for phosphopantetheinyl transfer and holo-ACP synthesis in E.coli. The native apo-protein substrate is unknown. Is able to functionally replace AcpS in vivo but only when expressed at high levels. This chain is 4'-phosphopantetheinyl transferase AcpT (acpT), found in Escherichia coli O157:H7.